Here is a 271-residue protein sequence, read N- to C-terminus: Orotidine 5'-phosphate decarboxylase (271 aa).

Residue Lys-95 is the Proton donor of the active site.

Belongs to the OMP decarboxylase family. Type 2 subfamily.

The catalysed reaction is orotidine 5'-phosphate + H(+) = UMP + CO2. It participates in pyrimidine metabolism; UMP biosynthesis via de novo pathway; UMP from orotate: step 2/2. The protein is Orotidine 5'-phosphate decarboxylase of Ralstonia pickettii (strain 12J).